The sequence spans 1004 residues: Unconventional myosin-Id (1004 aa).

The Myosin motor domain occupies 9 to 695; sequence FGKADFVLLD…TIFSLEEQRA (687 aa). Residue 102 to 109 participates in ATP binding; the sequence is GESGAGKT. An actin-binding region spans residues 572–594; the sequence is MISLVEKLASKEPYYVRCIKPND. 2 consecutive IQ domains span residues 699-719 and 721-741; these read KRIVLFLQKVWRGTLARMRYR and MRAALIIIRAYRRYKVKSYIR. The 192-residue stretch at 812–1003 folds into the TH1 domain; the sequence is GQRADLGLQR…RSGYILSVPG (192 aa).

The protein belongs to the TRAFAC class myosin-kinesin ATPase superfamily. Myosin family. In terms of assembly, interacts (via the two IQ motifs) with calmodulin. Interacts with F-actin.

Its subcellular location is the cytoplasm. It localises to the perikaryon. The protein localises to the cell projection. It is found in the dendrite. The protein resides in the early endosome. Its subcellular location is the cell cortex. Its function is as follows. Unconventional myosin that functions as actin-based motor protein with ATPase activity. Plays a role in the formation of Kupffer's vesicle, an organ that functions as a left-right organizer during embryogenesis. Plays a role in vesicular trafficking events that are required for normal lumen expansion of Kupffer's vesicle. Required for normal orientation of cilia in Kupffer's vesicle, and thus for normal, unidirectional circular flow and normal angular flow velocity, which then mediates asymmetric gene expression and left-right asymmetric development. Plays a role in endosomal protein trafficking, and especially in the transfer of cargo proteins from early to recycling endosomes. Required for normal planar cell polarity in ciliated cells, for normal rotational polarity of cilia, and for coordinated, unidirectional ciliary movement. In Danio rerio (Zebrafish), this protein is Unconventional myosin-Id (myo1d).